A 330-amino-acid chain; its full sequence is 5'-AMP-activated protein kinase subunit gamma-1 (330 aa).

Residues M1 to P12 are compositionally biased toward low complexity. The interval M1–S25 is disordered. 3 consecutive CBS domains span residues P42–L102, S124–E186, and I197–V259. ADP-binding positions include R69, M84–D89, V129, H150–R151, and K169. Residues R69, M84–D89, V129, H150, H150–R151, K169, T199, A204, S225–A226, and S241–D244 each bind AMP. ATP is bound by residues R69, M84–D89, V129, H150–R151, R151, and K169. The AMPK pseudosubstrate motif lies at L137 to E158. S241 to D244 serves as a coordination point for ADP. ATP is bound at residue S241–D244. S260 is subject to Phosphoserine; by ULK1. T262 carries the phosphothreonine; by ULK1 modification. R268 contributes to the ADP binding site. Residue R268 coordinates AMP. ATP is bound at residue R268. Phosphoserine; by ULK1 is present on S269. Residues Y271 to K328 form the CBS 4 domain. Residues L276 and H297–R298 contribute to the ADP site. AMP-binding positions include L276, H297, H297–R298, and S313–D316. ATP-binding positions include L276 and H297–R298.

The protein belongs to the 5'-AMP-activated protein kinase gamma subunit family. As to quaternary structure, AMPK is a heterotrimer of an alpha catalytic subunit (PRKAA1 or PRKAA2), a beta (PRKAB1 or PRKAB2) and a gamma non-catalytic subunits (PRKAG1, PRKAG2 or PRKAG3). Interacts with FNIP1 and FNIP2. Post-translationally, phosphorylated by ULK1 and ULK2; leading to negatively regulate AMPK activity and suggesting the existence of a regulatory feedback loop between ULK1, ULK2 and AMPK. There is some ambiguity for a phosphosite: Ser-260/Thr-262. Glycosylated; O-GlcNAcylated by OGT, promoting the AMP-activated protein kinase (AMPK) activity. Highly expressed in heart and brain, also found in kidney, white adipose tissue, lung and spleen.

In terms of biological role, AMP/ATP-binding subunit of AMP-activated protein kinase (AMPK), an energy sensor protein kinase that plays a key role in regulating cellular energy metabolism. In response to reduction of intracellular ATP levels, AMPK activates energy-producing pathways and inhibits energy-consuming processes: inhibits protein, carbohydrate and lipid biosynthesis, as well as cell growth and proliferation. AMPK acts via direct phosphorylation of metabolic enzymes, and by longer-term effects via phosphorylation of transcription regulators. Also acts as a regulator of cellular polarity by remodeling the actin cytoskeleton; probably by indirectly activating myosin. Gamma non-catalytic subunit mediates binding to AMP, ADP and ATP, leading to activate or inhibit AMPK: AMP-binding results in allosteric activation of alpha catalytic subunit (PRKAA1 or PRKAA2) both by inducing phosphorylation and preventing dephosphorylation of catalytic subunits. ADP also stimulates phosphorylation, without stimulating already phosphorylated catalytic subunit. ATP promotes dephosphorylation of catalytic subunit, rendering the AMPK enzyme inactive. The sequence is that of 5'-AMP-activated protein kinase subunit gamma-1 (Prkag1) from Rattus norvegicus (Rat).